A 502-amino-acid polypeptide reads, in one-letter code: ATP synthase subunit alpha (502 aa).

169-176 (GDRQTGKT) provides a ligand contact to ATP.

The protein belongs to the ATPase alpha/beta chains family. In terms of assembly, F-type ATPases have 2 components, CF(1) - the catalytic core - and CF(0) - the membrane proton channel. CF(1) has five subunits: alpha(3), beta(3), gamma(1), delta(1), epsilon(1). CF(0) has three main subunits: a(1), b(2) and c(9-12). The alpha and beta chains form an alternating ring which encloses part of the gamma chain. CF(1) is attached to CF(0) by a central stalk formed by the gamma and epsilon chains, while a peripheral stalk is formed by the delta and b chains.

The protein localises to the cell membrane. The catalysed reaction is ATP + H2O + 4 H(+)(in) = ADP + phosphate + 5 H(+)(out). Functionally, produces ATP from ADP in the presence of a proton gradient across the membrane. The alpha chain is a regulatory subunit. The polypeptide is ATP synthase subunit alpha (Staphylococcus aureus (strain Mu3 / ATCC 700698)).